Here is a 159-residue protein sequence, read N- to C-terminus: RxLR effector protein 24 (159 aa).

Residues 1–18 (MRFLVWVFFVGLVTFVSG) form the signal peptide. The RxLR-dEER motif lies at 58–82 (RFLRSNANQDLTTANDDSDVKEEER). The RABA-binding domain stretch occupies residues 109–159 (EKAFQHMMKQGETPTSLAKRLEIGGAAELRYEKVYEKYTAWWINYHTVAGT).

This sequence belongs to the RxLR effector family. In terms of assembly, interacts with potato RABA GTPases including RABA1a, RABA2a and RABA4a.

Its subcellular location is the secreted. It localises to the host cell membrane. The protein localises to the host endomembrane system. Effector protein that contributes to pathogen virulence. Targets members of the RABA GTPases subfamily to inhibit vesicular secretion, leading to an accumulation of secretory proteins in the endoplasmic reticulum. The sequence is that of RxLR effector protein 24 from Phytophthora infestans (strain T30-4) (Potato late blight agent).